A 149-amino-acid polypeptide reads, in one-letter code: Protein NrdI (149 aa).

This sequence belongs to the NrdI family.

Its function is as follows. Probably involved in ribonucleotide reductase function. The polypeptide is Protein NrdI (Malacoplasma penetrans (strain HF-2) (Mycoplasma penetrans)).